A 269-amino-acid chain; its full sequence is Prespore protein Dd31 (269 aa).

The segment covering 1-17 (MEHNNNPGTPQMSSEFP) has biased composition (polar residues). The interval 1–35 (MEHNNNPGTPQMSSEFPASTTQTSSSAAAYDNSSH) is disordered. Residues 18-29 (ASTTQTSSSAAA) show a composition bias toward low complexity. 4 helical membrane passes run 111–131 (FGIF…VVSI), 139–159 (VDNF…LYFL), 177–197 (YAYL…FVGF), and 225–245 (VSLF…IMYL).

It belongs to the SCAMP family.

The protein localises to the membrane. It is found in the spore coat. This is Prespore protein Dd31 (spiA) from Dictyostelium discoideum (Social amoeba).